The chain runs to 273 residues: Putative pyruvate, phosphate dikinase regulatory protein 2 (273 aa).

Residue G151–T158 coordinates ADP.

Belongs to the pyruvate, phosphate/water dikinase regulatory protein family. PDRP subfamily.

The catalysed reaction is N(tele)-phospho-L-histidyl/L-threonyl-[pyruvate, phosphate dikinase] + ADP = N(tele)-phospho-L-histidyl/O-phospho-L-threonyl-[pyruvate, phosphate dikinase] + AMP + H(+). The enzyme catalyses N(tele)-phospho-L-histidyl/O-phospho-L-threonyl-[pyruvate, phosphate dikinase] + phosphate + H(+) = N(tele)-phospho-L-histidyl/L-threonyl-[pyruvate, phosphate dikinase] + diphosphate. Functionally, bifunctional serine/threonine kinase and phosphorylase involved in the regulation of the pyruvate, phosphate dikinase (PPDK) by catalyzing its phosphorylation/dephosphorylation. The sequence is that of Putative pyruvate, phosphate dikinase regulatory protein 2 from Staphylococcus saprophyticus subsp. saprophyticus (strain ATCC 15305 / DSM 20229 / NCIMB 8711 / NCTC 7292 / S-41).